The primary structure comprises 185 residues: Deoxyuridine 5'-triphosphate nucleotidohydrolase (185 aa).

The disordered stretch occupies residues 1-23; the sequence is MSHLQAHMQRNNKESHSLSPFSQ. Substrate is bound by residues 95-97, asparagine 108, 112-114, and lysine 122; these read RSG and TID. Positions 160–185 are disordered; sequence DQKDSSQTPSNEGSRGADGFGSTGHD. Gly residues predominate over residues 175–185; the sequence is GADGFGSTGHD.

It belongs to the dUTPase family. The cofactor is Mg(2+).

It carries out the reaction dUTP + H2O = dUMP + diphosphate + H(+). It functions in the pathway pyrimidine metabolism; dUMP biosynthesis; dUMP from dCTP (dUTP route): step 2/2. Functionally, this enzyme is involved in nucleotide metabolism: it produces dUMP, the immediate precursor of thymidine nucleotides and it decreases the intracellular concentration of dUTP so that uracil cannot be incorporated into DNA. The polypeptide is Deoxyuridine 5'-triphosphate nucleotidohydrolase (Bartonella quintana (strain Toulouse) (Rochalimaea quintana)).